Here is a 3118-residue protein sequence, read N- to C-terminus: Laminin subunit alpha-2 (3118 aa).

An N-terminal signal peptide occupies residues 1–19 (MPAATAGILLLLLLGTLEG). The Laminin N-terminal domain maps to 31-282 (QQRGLFPAVL…SVKDISVGGM (252 aa)). Asn-51 and Asn-85 each carry an N-linked (GlcNAc...) asparagine glycan. Disulfide bonds link Cys-283/Cys-292, Cys-285/Cys-303, Cys-305/Cys-314, Cys-317/Cys-337, Cys-340/Cys-349, and Cys-342/Cys-374. 4 consecutive Laminin EGF-like domains span residues 283–339 (CICY…ECEA), 340–409 (CNCH…PCQP), 410–464 (CHCD…DCQP), and 465–513 (CNCS…GCEE). An N-linked (GlcNAc...) asparagine glycan is attached at Asn-299. N-linked (GlcNAc...) asparagine glycosylation is found at Asn-359 and Asn-376. 10 cysteine pairs are disulfide-bonded: Cys-377–Cys-386, Cys-389–Cys-407, Cys-410–Cys-422, Cys-412–Cys-438, Cys-440–Cys-449, Cys-452–Cys-462, Cys-465–Cys-478, Cys-467–Cys-482, Cys-484–Cys-493, and Cys-496–Cys-511. A glycan (N-linked (GlcNAc...) asparagine) is linked at Asn-466. One can recognise a Laminin EGF-like 5; first part domain in the interval 514-523 (CFCSGVSNRC). Residues 527–719 (YWTYGNIQDM…DRRIATDVEV (193 aa)) enclose the Laminin IV type A 1 domain. Residues 720 to 752 (CQCPPGYSGSSCETCWPRHRRVNGTIFGGICEP) enclose the Laminin EGF-like 5; second part domain. The N-linked (GlcNAc...) asparagine glycan is linked to Asn-742. 32 disulfides stabilise this stretch: Cys-753/Cys-762, Cys-755/Cys-769, Cys-772/Cys-781, Cys-784/Cys-800, Cys-803/Cys-818, Cys-805/Cys-828, Cys-831/Cys-840, Cys-843/Cys-858, Cys-861/Cys-875, Cys-863/Cys-882, Cys-885/Cys-894, Cys-897/Cys-911, Cys-914/Cys-926, Cys-916/Cys-933, Cys-935/Cys-944, Cys-947/Cys-960, Cys-963/Cys-975, Cys-965/Cys-981, Cys-983/Cys-992, Cys-995/Cys-1007, Cys-1010/Cys-1019, Cys-1012/Cys-1026, Cys-1028/Cys-1037, Cys-1040/Cys-1053, Cys-1056/Cys-1068, Cys-1058/Cys-1075, Cys-1077/Cys-1086, Cys-1089/Cys-1099, Cys-1102/Cys-1114, Cys-1104/Cys-1130, Cys-1132/Cys-1141, and Cys-1144/Cys-1159. Laminin EGF-like domains lie at 753–802 (CQCF…DCQP), 803–860 (CACP…SCQP), 861–913 (CQCN…NCQP), 914–962 (CRCN…GCLP), 963–1009 (CNCN…GCIA), 1010–1055 (CDCS…GCKV), 1056–1101 (CNCS…LCTL), and 1102–1161 (CDCF…GCSS). Asn-919 is a glycosylation site (N-linked (GlcNAc...) asparagine). Asn-1031 carries an N-linked (GlcNAc...) asparagine glycan. Asn-1057 is a glycosylation site (N-linked (GlcNAc...) asparagine). The Laminin EGF-like 14; first part domain occupies 1162–1171 (CYCFGVTSQC). Positions 1172–1375 (SEAKGLIRTW…GSPPAHLIER (204 aa)) constitute a Laminin IV type A 2 domain. Residues 1376-1415 (CDCPPGYSGLSCETCAPGFYRLRSEPGGRTPGPTLGTCVP) enclose the Laminin EGF-like 14; second part domain. Disulfide bonds link Cys-1378–Cys-1387, Cys-1416–Cys-1425, Cys-1418–Cys-1432, Cys-1435–Cys-1444, Cys-1447–Cys-1462, Cys-1465–Cys-1480, Cys-1467–Cys-1490, Cys-1493–Cys-1502, Cys-1505–Cys-1520, Cys-1523–Cys-1535, Cys-1525–Cys-1542, Cys-1544–Cys-1553, and Cys-1556–Cys-1567. Laminin EGF-like domains are found at residues 1416–1464 (CQCN…DCQP), 1465–1522 (CACP…SCQE), and 1523–1569 (CECD…ECVF). Residues 1570-2140 (CGDECTGLLL…NQARKQANSI (571 aa)) form a domain II and I region. 12 N-linked (GlcNAc...) asparagine glycosylation sites follow: Asn-1593, Asn-1610, Asn-1696, Asn-1806, Asn-1897, Asn-1912, Asn-1916, Asn-2013, Asn-2024, Asn-2041, Asn-2122, and Asn-2236. Positions 1662–1863 (QDAERTNSRA…DIKTKLPPMS (202 aa)) form a coiled coil. Residues 1923-2146 (AYSNIKDYID…ANSIKVSVSS (224 aa)) are a coiled coil. Laminin G-like domains are found at residues 2141–2324 (KVSV…CKGC), 2336–2517 (TIQF…TKGC), 2522–2706 (VYTV…IGRC), 2759–2930 (SKQF…VGTC), and 2929–3115 (TCFA…PVSC). Cys-2298 and Cys-2324 form a disulfide bridge. N-linked (GlcNAc...) asparagine glycosylation is found at Asn-2356, Asn-2431, and Asn-2474. A disulfide bond links Cys-2491 and Cys-2517. 3 N-linked (GlcNAc...) asparagine glycosylation sites follow: Asn-2547, Asn-2554, and Asn-2644. Cys-2679 and Cys-2706 form a disulfide bridge. N-linked (GlcNAc...) asparagine glycosylation occurs at Asn-2889. Cystine bridges form between Cys-2905/Cys-2930 and Cys-3083/Cys-3115.

In terms of assembly, laminin is a complex glycoprotein, consisting of three different polypeptide chains (alpha, beta, gamma), which are bound to each other by disulfide bonds into a cross-shaped molecule comprising one long and three short arms with globules at each end. Alpha-2 is a subunit of laminin-2 (laminin-211 or merosin), laminin-4 (laminin-221 or S-merosin) and laminin-12 (laminin-213). Interacts with FBLN1, FBLN2 and NID2.

Its subcellular location is the secreted. The protein resides in the extracellular space. The protein localises to the extracellular matrix. It is found in the basement membrane. Its function is as follows. Binding to cells via a high affinity receptor, laminin is thought to mediate the attachment, migration and organization of cells into tissues during embryonic development by interacting with other extracellular matrix components. The polypeptide is Laminin subunit alpha-2 (Lama2) (Mus musculus (Mouse)).